The chain runs to 112 residues: uncharacterized protein (112 aa).

The helical transmembrane segment at 62 to 82 (THSFIFFILFLFIFIFLTFSH) threads the bilayer.

Its subcellular location is the membrane. This is an uncharacterized protein from Saccharomyces cerevisiae (strain ATCC 204508 / S288c) (Baker's yeast).